Here is a 532-residue protein sequence, read N- to C-terminus: MDITTTEIYHDDHHTPHGWKRWLFSTNHKDIGIMYIIFAVFAGIVGGLFSLLFRLELAMPGGTFLNHDFQLYNVLITAHAVIMVFFMIMPALFGGFGNYFVPLLIGAPDMAFPRLNNISFWLLVTAFILLMGSAFVDGGPGTGWTLYPPLSNLSGHPGAAVDMAIFSLHLTGLSSILGSINLIVTIFNMRAPGMGLFKMPLFVWSILVTAFLIILAMPVLGGAITMLLTDRNFGTNFFKPDGGGDPVLFQHLFWFFGHPEVYIVILPGFGIVSQVISTFSRKPIFGYQGMVGAMVIIGFVGFIVWAHHMFTVGLSYNALIYFTAGTMIIAVPTGIKIFSWIATMWGGSITFPTPMLFSIGFIILFTIGGVTGIILSNSALDRVLHDTYYVVAHFHYTMSLGALFTAFAGFYYWFGKISGKQYPEILGKIHFWITFIGVNLTFFPQHFLGLAGMPRRIPDYPEAFAGWNMVSSIGAGISMAAALYFVFIVFYTLKYGKDCPNNPWGDGADTLEWTLTSPPPFHTFETPPHIEG.

The next 8 membrane-spanning stretches (helical) occupy residues 33–53 (IMYI…SLLF), 74–94 (VLIT…ALFG), 95–115 (GFGN…FPRL), 118–138 (ISFW…FVDG), 163–183 (MAIF…INLI), 200–220 (PLFV…MPVL), 252–272 (LFWF…FGIV), and 284–304 (IFGY…GFIV). His-79 serves as a coordination point for Fe(II)-heme a. Cu cation-binding residues include His-258 and Tyr-262. His-307 and His-308 together coordinate Cu cation. Transmembrane regions (helical) follow at residues 318–338 (ALIY…IKIF) and 355–375 (MLFS…GIIL). His-393 contacts heme a3. Helical transmembrane passes span 394–414 (FHYT…YYWF), 431–451 (FWIT…LGLA), and 473–493 (IGAG…FYTL). Position 395 (His-395) interacts with Fe(II)-heme a.

The protein belongs to the heme-copper respiratory oxidase family.

It is found in the cell membrane. It carries out the reaction 4 Fe(II)-[cytochrome c] + O2 + 8 H(+)(in) = 4 Fe(III)-[cytochrome c] + 2 H2O + 4 H(+)(out). It participates in energy metabolism; oxidative phosphorylation. Its function is as follows. Cytochrome c oxidase is the component of the respiratory chain that catalyzes the reduction of oxygen to water. Subunits 1-3 form the functional core of the enzyme complex. CO I is the catalytic subunit of the enzyme. Electrons originating in cytochrome c are transferred via the copper A center of subunit 2 and heme A of subunit 1 to the bimetallic center formed by heme A3 and copper B. This Rickettsia felis (strain ATCC VR-1525 / URRWXCal2) (Rickettsia azadi) protein is Probable cytochrome c oxidase subunit 1 (ctaD).